We begin with the raw amino-acid sequence, 270 residues long: LIM zinc-binding domain-containing Nebulette (270 aa).

One can recognise an LIM zinc-binding domain in the interval 3–63 (PQCARCGKVV…NAHYPKQSFT (61 aa)). Residues 61-95 (SFTTVADTPENLRLKQQSELQSQVKYKRDFEESKG) form a Nebulin 1 repeat. Arg-96 is modified (omega-N-methylarginine). The Nebulin 2 repeat unit spans residues 97-131 (GFSIVTDTPELQRLKRTQEQISNVKYHEDFEKTKG). An Omega-N-methylarginine modification is found at Arg-132. A Nebulin 3 repeat occupies 133–159 (GFTPVVDDPVTERVRKSTQVVSDAAYK). Position 135 is a phosphothreonine (Thr-135). The 61-residue stretch at 210-270 (AHLRTYRAMY…LPANYIEFVN (61 aa)) folds into the SH3 domain. Ser-230 bears the Phosphoserine mark.

Its subcellular location is the cytoplasm. In terms of biological role, binds to actin and plays an important role in the assembly of the Z-disk. Isoform 2 might play a role in the assembly of focal adhesion. The chain is LIM zinc-binding domain-containing Nebulette (Nebl) from Mus musculus (Mouse).